Reading from the N-terminus, the 329-residue chain is Probable carboxylesterase 13 (329 aa).

An N-acetylmethionine modification is found at M1. The short motif at 81-83 (HGG) is the Involved in the stabilization of the negatively charged intermediate by the formation of the oxyanion hole element. Active-site residues include S165, D269, and H302.

This sequence belongs to the 'GDXG' lipolytic enzyme family. Expressed in flowers.

The catalysed reaction is a carboxylic ester + H2O = an alcohol + a carboxylate + H(+). Carboxylesterase acting on esters with varying acyl chain length. This Arabidopsis thaliana (Mouse-ear cress) protein is Probable carboxylesterase 13 (CXE13).